The primary structure comprises 252 residues: Centromere protein V (252 aa).

The disordered stretch occupies residues M1–A80. At S18 the chain carries Phosphoserine. At R39 the chain carries Omega-N-methylarginine. The span at S54–R64 shows a compositional bias: pro residues. A Phosphothreonine modification is found at T78. The region spanning H125–E237 is the CENP-V/GFA domain. 7 residues coordinate Zn(2+): C129, C131, C149, C151, C154, C193, and C196. S234 is subject to Phosphoserine.

Belongs to the Gfa family. It depends on Zn(2+) as a cofactor.

The protein resides in the chromosome. It localises to the centromere. Its subcellular location is the kinetochore. It is found in the nucleus. The protein localises to the cytoplasm. The protein resides in the cytoskeleton. It localises to the spindle. Functionally, required for distribution of pericentromeric heterochromatin in interphase nuclei and for centromere formation and organization, chromosome alignment and cytokinesis. The sequence is that of Centromere protein V (Cenpv) from Mus musculus (Mouse).